A 161-amino-acid polypeptide reads, in one-letter code: ATP synthase subunit b 1 (161 aa).

The chain crosses the membrane as a helical span at residues 6–26 (ETWVAIAFVILMVVFGYLGVF).

It belongs to the ATPase B chain family. F-type ATPases have 2 components, F(1) - the catalytic core - and F(0) - the membrane proton channel. F(1) has five subunits: alpha(3), beta(3), gamma(1), delta(1), epsilon(1). F(0) has three main subunits: a(1), b(2) and c(10-14). The alpha and beta chains form an alternating ring which encloses part of the gamma chain. F(1) is attached to F(0) by a central stalk formed by the gamma and epsilon chains, while a peripheral stalk is formed by the delta and b chains.

It localises to the cell inner membrane. F(1)F(0) ATP synthase produces ATP from ADP in the presence of a proton or sodium gradient. F-type ATPases consist of two structural domains, F(1) containing the extramembraneous catalytic core and F(0) containing the membrane proton channel, linked together by a central stalk and a peripheral stalk. During catalysis, ATP synthesis in the catalytic domain of F(1) is coupled via a rotary mechanism of the central stalk subunits to proton translocation. Its function is as follows. Component of the F(0) channel, it forms part of the peripheral stalk, linking F(1) to F(0). This Bradyrhizobium diazoefficiens (strain JCM 10833 / BCRC 13528 / IAM 13628 / NBRC 14792 / USDA 110) protein is ATP synthase subunit b 1.